The chain runs to 437 residues: 26S proteasome subunit RPT4 (437 aa).

The disordered stretch occupies residues 1-51; sequence MSEEQDPLLAGLGETSGDNHTQQSHEQQPEQPQETEEHHEEEPSRVDPEQE. Serine 2 bears the N-acetylserine mark. Low complexity predominate over residues 20–32; it reads HTQQSHEQQPEQP. Basic and acidic residues predominate over residues 35 to 51; the sequence is TEEHHEEEPSRVDPEQE. 222-229 provides a ligand contact to ATP; it reads GPPGTGKT.

The protein belongs to the AAA ATPase family. In terms of processing, N-acetylated by NAT1.

Its function is as follows. The 26S proteasome is involved in the ATP-dependent degradation of ubiquitinated proteins. The regulatory (or ATPase) complex confers ATP dependency and substrate specificity to the 26S complex. This chain is 26S proteasome subunit RPT4 (RPT4), found in Saccharomyces cerevisiae (strain ATCC 204508 / S288c) (Baker's yeast).